The sequence spans 350 residues: MEALAPGRAPRGRRRAGASGSVLSPLSLAAVLLCALLRAPPAVGHLARLPRSIHLTQDSLKIVGSTHFPVSVYVMLHQKSPHVLCVTQRLRNTELVDPSFQWHGPKGKLVSENTTAQVTSTGSLIFQSFEETMSGVYTCFLEYKPTVEESIKNLQLKYIVYAYREPRFYYQFTARYHAAPCNSIYNISFEKKLLQILSKLVLDLSCEISLIKSECHRVKMQRAGLQNELFFTFSVASIDTEKGSKPCTDHSCEASKRLSKAKNLIERFFIQQVEVLGKRAEPLPEIYYIEGTLQMVWVNRCFPGYGINVLKHPKCPECCVVCSPGSFNPRDGTHCLQCNNSLVYGAKTCM.

The first 44 residues, 1–44 (MEALAPGRAPRGRRRAGASGSVLSPLSLAAVLLCALLRAPPAVG), serve as a signal peptide directing secretion. N-linked (GlcNAc...) asparagine glycans are attached at residues Asn113, Asn186, and Asn339.

The protein belongs to the zona pellucida-binding protein Sp38 family. Post-translationally, N-glycosylated. Expressed in testis (at protein level). Expressed in male germ cells.

The protein localises to the cytoplasmic vesicle. It localises to the secretory vesicle. It is found in the acrosome. Its subcellular location is the acrosome membrane. The protein resides in the secreted. In terms of biological role, plays a role in acrosome compaction and sperm morphogenesis. Is implicated in sperm-oocyte interaction during fertilization. In Mus musculus (Mouse), this protein is Zona pellucida-binding protein 1 (Zpbp).